The following is a 595-amino-acid chain: MKNLLKRYVSIKNIIKVIELDFFANLKLRYYKLAMKLFKIEDEKFDEILLKAGMNAVSSTYLPVVFLTSIILGLIIFIIFLIVFNIFYAIFGLIGGIFIVILIGVLYPYVLAEEKAKSIDENLPYAFAFISALSSANIPVVEIFTSLSKEDIYGGMSKEAKEIVKDTKVFNYDIITTFLRRARITPSKKLSSVYYNIVASLIVGAEMKNIFHEIYERLMEDRKLELFEAIEKVEILSEFYVIACGMIPLFVVMTVPVASSISAILQTASLFGDPKLLPLTFYLWVPIASIIFMGLVYGILPKDFKLNVSLLDVLKEFDEPEIEGIKMKFKWKPVHFITLFFWMLSIISFMLFFIRKSIFKFHGTDFLMFGILFLILPFILTSYWHFIIENQKERYYPIFLNDLTMAVRSGMDIIRAMQVCARTNYGPLTKIVKKMAIQMSWGRPVNEVFADLERTEKSLIAKRIASILKECAVSGGDVKDILTSVTVHAYKLSEMKREISARQFIYVVVIYLSFFLYIGTSYIMVHSLLPTLLKNIHGLSVEFYKNYLFQGILIYSIFSGASLGILTERSIIAGIKHILLMLIVGYMLFKFYIGG.

Helical transmembrane passes span 64–84, 86–106, 239–259, 281–301, 334–354, 368–388, 504–524, 547–567, and 571–591; these read VVFL…LIVF, IFYA…IGVL, FYVI…PVAS, FYLW…GILP, VHFI…LFFI, MFGI…HFII, FIYV…SYIM, YLFQ…GILT, and IIAG…LFKF.

To M.jannaschii FlaJ.

The protein localises to the cell membrane. This is an uncharacterized protein from Methanocaldococcus jannaschii (strain ATCC 43067 / DSM 2661 / JAL-1 / JCM 10045 / NBRC 100440) (Methanococcus jannaschii).